A 1076-amino-acid polypeptide reads, in one-letter code: GPI inositol-deacylase A (1076 aa).

Residues 3 to 23 (IATFPALAITALALVLWATVA) traverse the membrane as a helical segment. Asparagine 48 and asparagine 119 each carry an N-linked (GlcNAc...) asparagine glycan. Residue serine 240 is part of the active site. Residue asparagine 404 is glycosylated (N-linked (GlcNAc...) asparagine). 2 helical membrane passes run 765 to 785 (FLGFYRVMFAIFPMFVFLCLL) and 815 to 835 (WILAGSCAIPFVPHVLVSLLY). A glycan (N-linked (GlcNAc...) asparagine) is linked at asparagine 849. A run of 3 helical transmembrane segments spans residues 855 to 875 (FLGPVSLVIATGIVVVLHWLL), 877 to 897 (ILTLWVCQCYYMLGLAPIAPE), and 910 to 930 (FLLLLVFKIVPHQFAFMVAVL). N-linked (GlcNAc...) asparagine glycans are attached at residues asparagine 952 and asparagine 966. The next 3 membrane-spanning stretches (helical) occupy residues 970 to 990 (SLLLLLVLLLPINAPTLVVWL), 1006 to 1026 (EVSAILPILLLVLTASRGIMI), and 1035 to 1055 (IYATFAFLAYFALFVLFHGVV).

The protein belongs to the GPI inositol-deacylase family.

It localises to the endoplasmic reticulum membrane. Involved in inositol deacylation of GPI-anchored proteins which plays important roles in the quality control and ER-associated degradation of GPI-anchored proteins. This chain is GPI inositol-deacylase A (BST1A), found in Yarrowia lipolytica (strain CLIB 122 / E 150) (Yeast).